The chain runs to 163 residues: Glutathione peroxidase 1 (163 aa).

Cysteine 36 is an active-site residue.

It belongs to the glutathione peroxidase family.

The protein resides in the cytoplasm. The enzyme catalyses 2 glutathione + H2O2 = glutathione disulfide + 2 H2O. Functionally, may constitute a glutathione peroxidase-like protective system against oxidative stresses. The protein is Glutathione peroxidase 1 (gpx-1) of Caenorhabditis elegans.